The following is a 184-amino-acid chain: Probable RNA 2'-phosphotransferase (184 aa).

This sequence belongs to the KptA/TPT1 family.

Its function is as follows. Removes the 2'-phosphate from RNA via an intermediate in which the phosphate is ADP-ribosylated by NAD followed by a presumed transesterification to release the RNA and generate ADP-ribose 1''-2''-cyclic phosphate (APPR&gt;P). May function as an ADP-ribosylase. The protein is Probable RNA 2'-phosphotransferase of Escherichia coli (strain K12 / MC4100 / BW2952).